Here is a 168-residue protein sequence, read N- to C-terminus: ATP synthase subunit b (168 aa).

Residues Ser9–Leu29 form a helical membrane-spanning segment.

The protein belongs to the ATPase B chain family. F-type ATPases have 2 components, F(1) - the catalytic core - and F(0) - the membrane proton channel. F(1) has five subunits: alpha(3), beta(3), gamma(1), delta(1), epsilon(1). F(0) has three main subunits: a(1), b(2) and c(10-14). The alpha and beta chains form an alternating ring which encloses part of the gamma chain. F(1) is attached to F(0) by a central stalk formed by the gamma and epsilon chains, while a peripheral stalk is formed by the delta and b chains.

The protein resides in the cell membrane. F(1)F(0) ATP synthase produces ATP from ADP in the presence of a proton or sodium gradient. F-type ATPases consist of two structural domains, F(1) containing the extramembraneous catalytic core and F(0) containing the membrane proton channel, linked together by a central stalk and a peripheral stalk. During catalysis, ATP synthesis in the catalytic domain of F(1) is coupled via a rotary mechanism of the central stalk subunits to proton translocation. Functionally, component of the F(0) channel, it forms part of the peripheral stalk, linking F(1) to F(0). The protein is ATP synthase subunit b of Bacillus mycoides (strain KBAB4) (Bacillus weihenstephanensis).